The primary structure comprises 115 residues: Meromycolate extension acyl carrier protein (115 aa).

The Carrier domain occupies 3–81 (VTQEEIIAGI…DVVTYIQKLE (79 aa)). Position 41 is an O-(pantetheine 4'-phosphoryl)serine (Ser41).

The protein belongs to the acyl carrier protein (ACP) family. Post-translationally, 4'-phosphopantetheine is transferred from CoA to a specific serine of apo-AcpM.

The protein localises to the cytoplasm. Its function is as follows. Acyl carrier protein involved in meromycolate extension. This Mycobacterium leprae (strain TN) protein is Meromycolate extension acyl carrier protein (acpM).